The following is a 358-amino-acid chain: Probable cinnamyl alcohol dehydrogenase (358 aa).

Residue Cys-48 coordinates Zn(2+). Ser-50 is a binding site for NADP(+). 7 residues coordinate Zn(2+): His-70, Glu-71, Cys-101, Cys-104, Cys-107, Cys-115, and Cys-164. Residues Thr-168, 189 to 194, 212 to 217, Thr-252, Gly-276, and 299 to 301 each bind NADP(+); these read GLGGVG, SSSDKK, and SFV.

It belongs to the zinc-containing alcohol dehydrogenase family. In terms of assembly, homodimer. Zn(2+) serves as cofactor. In terms of tissue distribution, most actively expressed in stem, hypocotyl and root tissue.

The enzyme catalyses (E)-cinnamyl alcohol + NADP(+) = (E)-cinnamaldehyde + NADPH + H(+). It catalyses the reaction (E)-coniferol + NADP(+) = (E)-coniferaldehyde + NADPH + H(+). It carries out the reaction (E)-sinapyl alcohol + NADP(+) = (E)-sinapaldehyde + NADPH + H(+). The catalysed reaction is (E)-4-coumaroyl alcohol + NADP(+) = (E)-4-coumaraldehyde + NADPH + H(+). The enzyme catalyses (E)-caffeyl alcohol + NADP(+) = (E)-caffeyl aldehyde + NADPH + H(+). It participates in aromatic compound metabolism; phenylpropanoid biosynthesis. Its function is as follows. This protein catalyzes the final step in a branch of phenylpropanoid synthesis specific for production of lignin monomers. It acts on coniferyl-, sinapyl-, 4-coumaryl- and cinnamyl-alcohol. In Medicago sativa (Alfalfa), this protein is Probable cinnamyl alcohol dehydrogenase (CAD2).